Here is a 1087-residue protein sequence, read N- to C-terminus: Exportin-7 (1087 aa).

Ala-2 is modified (N-acetylalanine). Residues 30-96 (AEKALVEFTN…RNYVLNYLAT (67 aa)) form the Importin N-terminal domain. The residue at position 570 (Ser-570) is a Phosphoserine.

The protein belongs to the exportin family. As to quaternary structure, binds to nucleoporins. Found in a complex with XPO7, EIF4A1, ARHGAP1, VPS26A, VPS29, VPS35 and SFN. Interacts with ARHGAP1 and SFN. Interacts with Ran and cargo proteins in a GTP-dependent manner. In terms of tissue distribution, highly expressed in testis and spleen, moderate in kidney and liver and low in heart, brain, lung and skeletal muscle.

It is found in the cytoplasm. Its subcellular location is the nucleus. In terms of biological role, mediates the nuclear export of proteins (cargos) with broad substrate specificity. In the nucleus binds cooperatively to its cargo and to the GTPase Ran in its active GTP-bound form. Docking of this trimeric complex to the nuclear pore complex (NPC) is mediated through binding to nucleoporins. Upon transit of a nuclear export complex into the cytoplasm, disassembling of the complex and hydrolysis of Ran-GTP to Ran-GDP (induced by RANBP1 and RANGAP1, respectively) cause release of the cargo from the export receptor. XPO7 then return to the nuclear compartment and mediate another round of transport. The directionality of nuclear export is thought to be conferred by an asymmetric distribution of the GTP- and GDP-bound forms of Ran between the cytoplasm and nucleus. The protein is Exportin-7 (Xpo7) of Mus musculus (Mouse).